Consider the following 80-residue polypeptide: UPF0291 protein YlaC (80 aa).

This sequence belongs to the UPF0291 family.

The protein resides in the cytoplasm. In Lactococcus lactis subsp. lactis (strain IL1403) (Streptococcus lactis), this protein is UPF0291 protein YlaC (ylcA).